The sequence spans 632 residues: MIKDPLGAVKSTFAEEVNRVLRDLGSATRFSPIQVSRVRKDYASYGLPVGFKVAKDLNLDPERAAKTVLDRIDMSRIAYSSDAYAESGYLNLRIDKARFFRDILKLASSEELGRGERKGVVGMVEHTSANPVHPLHVGSGRNAVIGDSFSRILNFLGWDVRRHYLVNDCNLQVAILAAGRSKVRDLIPKGKVDHWFGLIYAISNAFLEIWRIKNGFNSESKIEEWSEVVERIGRMEPELLRIGELSEEEVMSLLREYQRKEGGSVQMFREITESVLRGFVETLERMGITYDSFDRESELIWDGWVDRAIEKLESSGYLKREGKAAYVDLWEAAKGDENVRKVFELSEDDISKLEREGKLGEVIPRKFYLTRSDGTWLYTGTDVAYSLYKFDGLGVSFCYNVIASEQNMEQKGVRACLALMGHDPGKLIHLSYEMVNLVGAAMSGRRGLYITLDEVLDEAKRRVEAILKERGIYDEEICEKVAIGALKYGLISVSPNKVVQFRWERVLNLEENSGPFIQYAYTRALNIIKKAQGVPEDFDPNELKSDAEITIVQMISEFPERVWSAFNLMRPDIIASYANELASQFNKFYEDHPVLSAARPEERAARLNLVNAVKGTLGLAMDLIGIPRLERM.

The 'HIGH' region signature appears at 129-139 (ANPVHPLHVGS).

The protein belongs to the class-I aminoacyl-tRNA synthetase family.

The protein localises to the cytoplasm. The enzyme catalyses tRNA(Arg) + L-arginine + ATP = L-arginyl-tRNA(Arg) + AMP + diphosphate. In Korarchaeum cryptofilum (strain OPF8), this protein is Arginine--tRNA ligase.